A 263-amino-acid polypeptide reads, in one-letter code: Ubiquitin domain-containing protein 7SL RNA2 (263 aa).

Residues 1 to 53 (MNVDIDTETGSSFSITIDFGETVLQIKEKIEKSQGIPVSKQILYLDGKALEDD) form the Ubiquitin-like 1 domain. The tract at residues 74-93 (ADPNQSNEQTEQSKQIDDKK) is disordered. The span at 76–86 (PNQSNEQTEQS) shows a compositional bias: polar residues. One can recognise a Ubiquitin-like 2 domain in the interval 184–263 (FTVHVKPYQE…GDTIELIREK (80 aa)).

This sequence belongs to the ubiquitin family. As to expression, expressed in seedlings, roots, stems, rosettes and flowers (at protein level).

Its subcellular location is the nucleus. Functionally, controls phase transition from the vegetative to the reproductive state. Involved in the maintenance of the shoot apical meristem (SAM) thus preventing inflorescence meristem (IM) formation and subsequent inflorescence stem development during flowering. Regulates leaf and organ morphology. The sequence is that of Ubiquitin domain-containing protein 7SL RNA2 from Arabidopsis thaliana (Mouse-ear cress).